Reading from the N-terminus, the 248-residue chain is Ubiquinone/menaquinone biosynthesis C-methyltransferase UbiE (248 aa).

S-adenosyl-L-methionine-binding residues include Ser68 and Asp92.

Belongs to the class I-like SAM-binding methyltransferase superfamily. MenG/UbiE family.

It catalyses the reaction a 2-demethylmenaquinol + S-adenosyl-L-methionine = a menaquinol + S-adenosyl-L-homocysteine + H(+). The catalysed reaction is a 2-methoxy-6-(all-trans-polyprenyl)benzene-1,4-diol + S-adenosyl-L-methionine = a 5-methoxy-2-methyl-3-(all-trans-polyprenyl)benzene-1,4-diol + S-adenosyl-L-homocysteine + H(+). Its pathway is quinol/quinone metabolism; menaquinone biosynthesis; menaquinol from 1,4-dihydroxy-2-naphthoate: step 2/2. It functions in the pathway cofactor biosynthesis; ubiquinone biosynthesis. In terms of biological role, methyltransferase required for the conversion of demethylmenaquinol (DMKH2) to menaquinol (MKH2) and the conversion of 2-polyprenyl-6-methoxy-1,4-benzoquinol (DDMQH2) to 2-polyprenyl-3-methyl-6-methoxy-1,4-benzoquinol (DMQH2). In Rickettsia bellii (strain RML369-C), this protein is Ubiquinone/menaquinone biosynthesis C-methyltransferase UbiE.